The sequence spans 190 residues: MSERTLPDDLVELGRVASAYGVKGWIKVQPHSAQADVLRAAKQWWLAATPKSAPRVYAVQQCRVHGATAVAQLEGIADRDQAEALRGATVWVSRALFPAAAEDEYYWIDLVGCAFYSSVSGSDVRVGVVEEVFDNPAHAILRVVCQDAEGKALLDAKGRAREMLVPFVSAHIQAVDIAARRIDSDWPLED.

The region spanning E102–D190 is the PRC barrel domain.

The protein belongs to the RimM family. Binds ribosomal protein uS19.

The protein localises to the cytoplasm. Functionally, an accessory protein needed during the final step in the assembly of 30S ribosomal subunit, possibly for assembly of the head region. Essential for efficient processing of 16S rRNA. May be needed both before and after RbfA during the maturation of 16S rRNA. It has affinity for free ribosomal 30S subunits but not for 70S ribosomes. This chain is Ribosome maturation factor RimM, found in Bordetella avium (strain 197N).